We begin with the raw amino-acid sequence, 143 residues long: Ribonuclease H (143 aa).

The RNase H type-1 domain maps to 1–140 (MKVEIYTDGA…VDALANLGIE (140 aa)). Mg(2+) contacts are provided by aspartate 8, glutamate 46, aspartate 68, and aspartate 132.

Belongs to the RNase H family. In terms of assembly, monomer. Requires Mg(2+) as cofactor.

The protein resides in the cytoplasm. It carries out the reaction Endonucleolytic cleavage to 5'-phosphomonoester.. Endonuclease that specifically degrades the RNA of RNA-DNA hybrids. The chain is Ribonuclease H from Legionella pneumophila (strain Paris).